Here is a 356-residue protein sequence, read N- to C-terminus: MLKVPLSDVLSQKMLFLKSFRYFHCTKYFSRDNASSTTDIFRNAMKRKRELANLKEQSHGNVARNAAFPKEYIKRPKQVPRNATNRKKILITWSTGTDRAKEAANSVVSEIFKKNHKGNIKVVDPTTHRIEPSNIRYFAKGIDLDKVGLSIVNVEQIDNENQIPLVKIIESRVALKKYSDFLAKKKEKELMELGVLNKSYKNLVTDKKEDNLKHIKISWQIESDDLKRQKAHEIVSLLKKGNKVTLYLDDKNNINSNNWLENFEELDRSQKGEPPRLPESVFQKRAAVLETLKEIVSEYANDPVLLGNMNSKMIMKLIPKDVKPQNNDKRALKELRKKERQEKLQKRIQRKKMNEM.

The N-terminal 32 residues, 1-32 (MLKVPLSDVLSQKMLFLKSFRYFHCTKYFSRD), are a transit peptide targeting the mitochondrion.

This sequence belongs to the AIM23 family.

The protein localises to the mitochondrion. The chain is Altered inheritance of mitochondria protein 23, mitochondrial (AIM23) from Saccharomyces cerevisiae (strain RM11-1a) (Baker's yeast).